The sequence spans 66 residues: Conotoxin Cal5.2 (66 aa).

A signal peptide spans Met-1–Thr-20. A propeptide spanning residues Phe-21–Gln-51 is cleaved from the precursor. A Valine amide modification is found at Val-65.

This sequence belongs to the conotoxin T superfamily. In terms of processing, contains 2 disulfide bonds that can be either 'C1-C3, C2-C4' or 'C1-C4, C2-C3', since these disulfide connectivities have been observed for conotoxins with cysteine framework V (for examples, see AC P0DQQ7 and AC P81755). Expressed by the venom duct.

It is found in the secreted. In terms of biological role, probable neurotoxin with unknown target. Possibly targets ion channels. The sequence is that of Conotoxin Cal5.2 from Californiconus californicus (California cone).